Reading from the N-terminus, the 446-residue chain is D(1A) dopamine receptor (446 aa).

At 1-23 (MRTLNTSTMDGTGLVVERDFSFR) the chain is on the extracellular side. N-linked (GlcNAc...) asparagine glycosylation is present at Asn5. The chain crosses the membrane as a helical span at residues 24 to 49 (ILTACFLSLLILSTLLGNTLVCAAVI). Over 50–60 (RFRHLRSKVTN) the chain is Cytoplasmic. The chain crosses the membrane as a helical span at residues 61 to 87 (FFVISLAVSDLLVAVLVMPWKAVAEIA). The Extracellular portion of the chain corresponds to 88–96 (GFWPFGSFC). Cys96 and Cys186 are oxidised to a cystine. Residues 97-119 (NIWVAFDIMCSTASILNLCVISV) traverse the membrane as a helical segment. Over 120–138 (DRYWAISSPFRYERKMTPK) the chain is Cytoplasmic. The chain crosses the membrane as a helical span at residues 139 to 163 (AAFILISVAWTLSVLISFIPVQLSW). At 164 to 192 (HKAKPTSPSDGNVTSLGKTTHNCDSSLSR) the chain is on the extracellular side. The chain crosses the membrane as a helical span at residues 193-218 (TYAISSSLISFYIPVAIMIVTYTRIY). Topologically, residues 219–272 (RIAQKQIRRISALERAAVHAKNCQTTAGNGNPAECSQPESSFKMSFKRETKVLK) are cytoplasmic. The chain crosses the membrane as a helical span at residues 273–299 (TLSVIMGVFVCCWLPFFILNCMVPFCG). Topologically, residues 300–312 (SGETKPFCIDSIT) are extracellular. Residues 313-337 (FDVFVWFGWANSSLNPIIYAFNADF) form a helical membrane-spanning segment. The Cytoplasmic segment spans residues 338 to 446 (RKAFSTLLGC…PITQNGQHPT (109 aa)). Residues Cys347 and Cys351 are each lipidated (S-palmitoyl cysteine).

The protein belongs to the G-protein coupled receptor 1 family. In terms of assembly, interacts with DNAJC14 via its C-terminus. Interacts with DRD2. Interacts with DORIP1.

The protein resides in the cell membrane. Its subcellular location is the endoplasmic reticulum membrane. It localises to the cell projection. It is found in the cilium membrane. The protein localises to the dendrite. The protein resides in the dendritic spine. Functionally, dopamine receptor whose activity is mediated by G proteins which activate adenylyl cyclase. The chain is D(1A) dopamine receptor (DRD1) from Sus scrofa (Pig).